We begin with the raw amino-acid sequence, 393 residues long: MTEGRKPHINVGTIGHVDHGKTTLTAALTTVLTRRLSGANKVVKYDEIDKAPEERARGITISTAHVEYETEGRHYAHVDCPGHADYIKNMITGAAQMDVAILVVSATDGAMPQTREHILLAKQVGVKDIVTWINKCDVVEDEEMLSIVEMEVRELLSNYGYDGDGVDVVRGSAVKALEESSDGPWSEKIMELVGALEKIELPVREKDKPFLMSVEDVFSIPGRGTVVTGRIERGVIKVGDKVDIVGLRDLQSTVCTGVEMFHKALETGEAGDNAGILLRGIKKEDVERGQVLSAPGQIRSYKAFKAEVYILKKEEGGRHTPFFSNYQPQFYVRTTDVTGSIKLPSGVEMVMPGDNLSIEVALDKPVALDKGLRFAVREGGRTVGSGIITEILE.

Residues 6 to 204 form the tr-type G domain; that stretch reads KPHINVGTIG…ALEKIELPVR (199 aa). Positions 15 to 22 are G1; it reads GHVDHGKT. Residue 15–22 coordinates GTP; the sequence is GHVDHGKT. T22 provides a ligand contact to Mg(2+). Positions 58–62 are G2; it reads GITIS. The G3 stretch occupies residues 79–82; it reads DCPG. GTP is bound by residues 79 to 83 and 134 to 137; these read DCPGH and NKCD. A G4 region spans residues 134-137; that stretch reads NKCD. Residues 172 to 174 are G5; the sequence is SAV.

The protein belongs to the TRAFAC class translation factor GTPase superfamily. Classic translation factor GTPase family. EF-Tu/EF-1A subfamily. Monomer.

It is found in the cytoplasm. It catalyses the reaction GTP + H2O = GDP + phosphate + H(+). In terms of biological role, GTP hydrolase that promotes the GTP-dependent binding of aminoacyl-tRNA to the A-site of ribosomes during protein biosynthesis. This Anaplasma marginale (strain St. Maries) protein is Elongation factor Tu.